A 287-amino-acid chain; its full sequence is uncharacterized protein (287 aa).

Positions methionine 1 to asparagine 17 are enriched in basic and acidic residues. Residues methionine 1–phenylalanine 29 are disordered. A helical transmembrane segment spans residues leucine 38–glycine 60.

The protein resides in the membrane. This is an uncharacterized protein from Escherichia coli O6:H1 (strain CFT073 / ATCC 700928 / UPEC).